The sequence spans 103 residues: Secreted Ly-6/uPAR-related protein 1 (103 aa).

The signal sequence occupies residues 1-22; it reads MASRWAVQLLLVAAWSMGCGEA. Positions 24-73 constitute a UPAR/Ly6 domain; that stretch reads KCYTCKEPMTSASCRTITRCKPEDTACMTTLVTVEAEYPFNQSPVVTRSC. Disulfide bonds link Cys25–Cys50, Cys28–Cys37, Cys43–Cys73, Cys77–Cys93, and Cys94–Cys99.

In terms of assembly, homodimer. Interacts with PLAU. Interacts with CHRNA7. As to expression, granulocytes. Expressed in skin. Predominantly expressed in the granular layer of skin, notably the acrosyringium. Identified in several biological fluids such as sweat, saliva, tears, plasma and urine.

It localises to the secreted. Functionally, has an antitumor activity. Was found to be a marker of late differentiation of the skin. Implicated in maintaining the physiological and structural integrity of the keratinocyte layers of the skin. In vitro down-regulates keratinocyte proliferation; the function may involve the proposed role as modulator of nicotinic acetylcholine receptors (nAChRs) activity. In vitro inhibits alpha-7-dependent nAChR currents in an allosteric manner. In T cells may be involved in regulation of intracellular Ca(2+) signaling. Seems to have an immunomodulatory function in the cornea. The function may implicate a possible role as a scavenger receptor for PLAU thereby blocking PLAU-dependent functions of PLAUR such as in cell migration and proliferation. This is Secreted Ly-6/uPAR-related protein 1 (SLURP1) from Homo sapiens (Human).